The chain runs to 159 residues: Afifavidin (159 aa).

Positions 1 to 23 are cleaved as a signal peptide; sequence MRRLASLAVALPLLAVVASPALA. In terms of domain architecture, Avidin-like spans 36-151; that stretch reads GVPAVSSSWV…GSDTFTLVNK (116 aa). The biotin site is built by asparagine 46, serine 50, tyrosine 66, asparagine 68, and glycine 74. A disulfide bond links cysteine 75 and cysteine 104. Residues serine 106, threonine 108, and aspartate 144 each contribute to the biotin site.

Belongs to the avidin/streptavidin family. In terms of assembly, exhibits a dynamic oligomeric assembly: the apo form self-assembles mostly into toroid-shaped homooctamers, with a small fraction of homodimers, yet upon biotin binding the intact afifavidin consists solely of the dimer.

It is found in the secreted. The exact role played by afifavidin is still obscure. Forms a strong non-covalent complex with biotin and 2-iminobiotin. The chain is Afifavidin from Afifella pfennigii (Rhodobium pfennigii).